Reading from the N-terminus, the 834-residue chain is Protein translocase subunit SecA (834 aa).

ATP is bound by residues Q85, 103–107 (GEGKT), and D491. Positions 790-809 (RETSTNINDGEGGSHEPIKR) are disordered. The Zn(2+) site is built by C820, C822, C831, and C832.

This sequence belongs to the SecA family. As to quaternary structure, monomer and homodimer. Part of the essential Sec protein translocation apparatus which comprises SecA, SecYEG and auxiliary proteins SecDF. Other proteins may also be involved. Requires Zn(2+) as cofactor.

The protein resides in the cell membrane. The protein localises to the cytoplasm. The catalysed reaction is ATP + H2O + cellular proteinSide 1 = ADP + phosphate + cellular proteinSide 2.. In terms of biological role, part of the Sec protein translocase complex. Interacts with the SecYEG preprotein conducting channel. Has a central role in coupling the hydrolysis of ATP to the transfer of proteins into and across the cell membrane, serving as an ATP-driven molecular motor driving the stepwise translocation of polypeptide chains across the membrane. In Clostridium novyi (strain NT), this protein is Protein translocase subunit SecA.